Consider the following 155-residue polypeptide: Ribonuclease H (155 aa).

One can recognise an RNase H type-1 domain in the interval 1 to 142 (MLKQVEIFTD…CDELARAAAM (142 aa)). The Mg(2+) site is built by D10, E48, D70, and D134.

The protein belongs to the RNase H family. In terms of assembly, monomer. Mg(2+) serves as cofactor.

Its subcellular location is the cytoplasm. The enzyme catalyses Endonucleolytic cleavage to 5'-phosphomonoester.. Functionally, endonuclease that specifically degrades the RNA of RNA-DNA hybrids. The protein is Ribonuclease H of Salmonella paratyphi C (strain RKS4594).